Consider the following 370-residue polypeptide: Isopentenyl-diphosphate delta-isomerase (370 aa).

8-9 contacts substrate; that stretch reads RK. Residues T65, 66–68, S99, and N127 each bind FMN; that span reads GMT. 99-101 contributes to the substrate binding site; sequence SQR. A substrate-binding site is contributed by Q166. E167 lines the Mg(2+) pocket. FMN-binding positions include K198, S223, T228, 277–279, and 298–299; these read GMR and AL.

The protein belongs to the IPP isomerase type 2 family. As to quaternary structure, homooctamer. Dimer of tetramers. It depends on FMN as a cofactor. NADPH serves as cofactor. Requires Mg(2+) as cofactor.

The protein resides in the cytoplasm. The enzyme catalyses isopentenyl diphosphate = dimethylallyl diphosphate. In terms of biological role, involved in the biosynthesis of isoprenoids. Catalyzes the 1,3-allylic rearrangement of the homoallylic substrate isopentenyl (IPP) to its allylic isomer, dimethylallyl diphosphate (DMAPP). The polypeptide is Isopentenyl-diphosphate delta-isomerase (Pyrococcus abyssi (strain GE5 / Orsay)).